Reading from the N-terminus, the 360-residue chain is Dihydroorotate dehydrogenase (quinone) (360 aa).

FMN is bound by residues 66–70 (AGFDK) and T90. Position 70 (K70) interacts with substrate. 115–119 (NRMGF) is a binding site for substrate. Positions 143 and 176 each coordinate FMN. N176 provides a ligand contact to substrate. The active-site Nucleophile is S179. N181 serves as a coordination point for substrate. FMN-binding residues include K212 and T240. 241-242 (NT) is a substrate binding site. FMN is bound by residues G264, G293, and 314 to 315 (YT).

The protein belongs to the dihydroorotate dehydrogenase family. Type 2 subfamily. Monomer. It depends on FMN as a cofactor.

The protein localises to the cell membrane. It catalyses the reaction (S)-dihydroorotate + a quinone = orotate + a quinol. It participates in pyrimidine metabolism; UMP biosynthesis via de novo pathway; orotate from (S)-dihydroorotate (quinone route): step 1/1. Catalyzes the conversion of dihydroorotate to orotate with quinone as electron acceptor. The sequence is that of Dihydroorotate dehydrogenase (quinone) from Mycobacterium ulcerans (strain Agy99).